The chain runs to 113 residues: Cholecystoxin (113 aa).

The first 20 residues, 1-20 (MYGGICLCVLLAVLAISSSG), serve as a signal peptide directing secretion. The propeptide occupies 21–79 (QHISRSLNGNSLAAAIEQNFPEKHRPARTPDSNQRVESNIDEKANLGVLLARYLQKARR). A disordered region spans residues 77-97 (ARRGTNGKPPDPKKESQDYLG). The residue at position 95 (Tyr-95) is a Sulfotyrosine. Phe-101 carries the post-translational modification Phenylalanine amide. Positions 102–113 (GRRSAEEYEYSS) are excised as a propeptide.

The protein belongs to the gastrin/cholecystokinin family. Expressed by the mandibular venom gland.

It is found in the secreted. Functionally, cholecystokinin-22: hypotensive neuropeptide that binds cholecystokinin receptor type A receptor (CCKAR). Cholecystokinin-8: hypotensive neuropeptide that binds cholecystokinin receptor type A receptor (CCKAR). The sequence is that of Cholecystoxin from Varanus varius (Lace monitor lizard).